The following is a 208-amino-acid chain: Potassium-transporting ATPase KdpC subunit (208 aa).

The chain crosses the membrane as a helical span at residues 6–26; sequence PALLVSIVLLVVCGLVYPLVL.

The protein belongs to the KdpC family. The system is composed of three essential subunits: KdpA, KdpB and KdpC.

The protein resides in the cell membrane. Part of the high-affinity ATP-driven potassium transport (or Kdp) system, which catalyzes the hydrolysis of ATP coupled with the electrogenic transport of potassium into the cytoplasm. This subunit acts as a catalytic chaperone that increases the ATP-binding affinity of the ATP-hydrolyzing subunit KdpB by the formation of a transient KdpB/KdpC/ATP ternary complex. The polypeptide is Potassium-transporting ATPase KdpC subunit (Clostridioides difficile (strain 630) (Peptoclostridium difficile)).